Consider the following 176-residue polypeptide: Transcription factor E (176 aa).

In terms of domain architecture, HTH TFE/IIEalpha-type spans 8-90 (NDPVIQKYLH…LWTFHYENIP (83 aa)).

It belongs to the TFE family. Monomer. Interaction with RNA polymerase subunits RpoF and RpoE is necessary for Tfe stimulatory transcription activity. Able to interact with Tbp and RNA polymerase in the absence of DNA promoter. Interacts both with the preinitiation and elongation complexes.

In terms of biological role, transcription factor that plays a role in the activation of archaeal genes transcribed by RNA polymerase. Facilitates transcription initiation by enhancing TATA-box recognition by TATA-box-binding protein (Tbp), and transcription factor B (Tfb) and RNA polymerase recruitment. Not absolutely required for transcription in vitro, but particularly important in cases where Tbp or Tfb function is not optimal. It dynamically alters the nucleic acid-binding properties of RNA polymerases by stabilizing the initiation complex and destabilizing elongation complexes. Seems to translocate with the RNA polymerase following initiation and acts by binding to the non template strand of the transcription bubble in elongation complexes. This is Transcription factor E from Haloquadratum walsbyi (strain DSM 16790 / HBSQ001).